The sequence spans 271 residues: Aminoglycoside 3'-phosphotransferase (271 aa).

The active-site Proton acceptor is the aspartate 198.

The protein belongs to the aminoglycoside phosphotransferase family.

The enzyme catalyses kanamycin A + ATP = kanamycin 3'-phosphate + ADP + H(+). Its function is as follows. Resistance to kanamycin and structurally-related aminoglycosides, including amikacin. The polypeptide is Aminoglycoside 3'-phosphotransferase (aphA) (Escherichia coli).